A 2554-amino-acid chain; its full sequence is DnaJ homolog subfamily C GRV2 (2554 aa).

Disordered regions lie at residues 746-766 and 810-833; these read DVVDDTDQEGSSTNRRQKRLL and QRRAADSSSEASNPQASAFPGVDS. Polar residues predominate over residues 815-825; it reads DSSSEASNPQA. Coiled coils occupy residues 925–951 and 1518–1546; these read TRQELIEALKAEVHNLDVEKERTEDIS and RTASVELNEEISNISKQIQNLDEEKLKRQ. The region spanning 1524-1606 is the J domain; the sequence is LNEEISNISK…AQCILYRRYG (83 aa). 2 disordered regions span residues 1960-1994 and 2339-2366; these read IEDRNSSNDTPELQSSVAEPSLIEEHSDHQPSSEG and SGEVKAEEIGSDGVNESTDPSSLPGQTP. Residues 1966 to 1977 show a composition bias toward polar residues; the sequence is SNDTPELQSSVA. Residues 1982–1994 are compositionally biased toward basic and acidic residues; that stretch reads IEEHSDHQPSSEG. Over residues 2352-2366 the composition is skewed to polar residues; the sequence is VNESTDPSSLPGQTP.

As to expression, constitutively expressed in roots, hypocotyls, leaves (e.g. vascular tissues), stems, flowers (e.g. petals and stigmas), siliques and pollen.

Its subcellular location is the endosome membrane. Its function is as follows. Required for endosome formation, vacuolar protein sorting and determination of the embryo growth axis. Necessary for the transport of proteins into protein storage vacuoles (PSVs). Participates in vesicle trafficking from the endosome to the central vacuole. Involved in the regulation of shoot phototropism and gravitropism, probably through the positioning of specialized amyloplasts (statoliths) in endodermal cells. The polypeptide is DnaJ homolog subfamily C GRV2 (GRV2) (Arabidopsis thaliana (Mouse-ear cress)).